The following is a 428-amino-acid chain: GTPase Obg (428 aa).

Residues 1 to 158 (MFVDQVKIYV…RYIVLELKVL (158 aa)) form the Obg domain. The disordered stretch occupies residues 118-143 (KGGRGGRGNTRFATPANPAPQLSENG). The OBG-type G domain occupies 159 to 329 (ADVGLVGFPS…LLFEIADRLE (171 aa)). Residues 165-172 (GFPSVGKS), 190-194 (FTTLN), 212-215 (DLPG), 282-285 (NKMD), and 310-312 (SAV) contribute to the GTP site. 2 residues coordinate Mg(2+): S172 and T192. The OCT domain occupies 350–428 (KLEDEEAPFE…LLEFEFEFID (79 aa)).

The protein belongs to the TRAFAC class OBG-HflX-like GTPase superfamily. OBG GTPase family. As to quaternary structure, monomer. The cofactor is Mg(2+).

The protein localises to the cytoplasm. Its function is as follows. An essential GTPase which binds GTP, GDP and possibly (p)ppGpp with moderate affinity, with high nucleotide exchange rates and a fairly low GTP hydrolysis rate. Plays a role in control of the cell cycle, stress response, ribosome biogenesis and in those bacteria that undergo differentiation, in morphogenesis control. The protein is GTPase Obg of Bacillus licheniformis (strain ATCC 14580 / DSM 13 / JCM 2505 / CCUG 7422 / NBRC 12200 / NCIMB 9375 / NCTC 10341 / NRRL NRS-1264 / Gibson 46).